A 374-amino-acid chain; its full sequence is MGSKVSVEESVRVVIVGGGFAGIAAATQLKSFGIPFVLVDLKDAFHHNVAALRASVESGFARKTFISYKDTFQDNFIQGKVVGINLQTQRVILESNEELQFSHLIIATGSNGPFPGKINNVISKDQAIQVYEDLVKEIQKAKHVVVVGGGSAGVEMAAEVKTDYPEKEVTLVHSKVALADVQLQPKVRRTVKEILLSKGVRLILAQKVTNLDQVTSNVAQENTVLQLDKNSEVVTCDLVLCCTGYKISSSSYSSAFGDKLAEDGALIVNDYLQVQGHANVYAVGDCAYINEPKMAYYAGIHARVAATNVRNSLIGKSLKTYKPGALSMLLSMGRNDGVGQFNGCYLGRFFVTMAKSRDIFVSKSWKEMGQTMPR.

Gly-2 is lipidated: N-myristoyl glycine. The chain crosses the membrane as a helical span at residues 13–35 (VVIVGGGFAGIAAATQLKSFGIP). 6-hydroxy-FAD contacts are provided by residues 17–21 (GGGFA), Arg-53, and Val-81. N6-acetyllysine is present on Lys-167. Asp-285 lines the 6-hydroxy-FAD pocket.

This sequence belongs to the FAD-dependent oxidoreductase family. It depends on 6-hydroxy-FAD as a cofactor. In terms of processing, N-myristoylation at Gly-2 mediates the recruitment to lipid droplets and plasma membrane. Post-translationally, acetylation at Lys-167 prevents AIFM2 ubiquitination and degradation, thereby inhibiting ferroptosis. KAT2B mediates acetylation at Lys-167, while HDAC3 removes it. Ubiquitinated. AIFM2 undergoes 'Lys-29'-ubiquitination and proteasomal degradation, which is inhibited by acetylation at Lys-167.

Its subcellular location is the lipid droplet. It localises to the cell membrane. The protein localises to the cytoplasm. The protein resides in the mitochondrion membrane. It is found in the nucleus. The enzyme catalyses ubiquinone-10 + NADH + H(+) = ubiquinol-10 + NAD(+). It catalyses the reaction phylloquinone + NADH + H(+) = phylloquinol + NAD(+). It carries out the reaction menaquinone-4 + NADH + H(+) = menaquinol-4 + NAD(+). The catalysed reaction is menadione + NADH + H(+) = menadiol + NAD(+). The modification by 4-hydroxy-2-nonenal (HNE) adduction in mitochondria results in loss of the oxidoreductase activity and activation of a novel function in mitochondrial oxidative stress signaling. Its function is as follows. An NAD(P)H-dependent oxidoreductase that acts as a key inhibitor of ferroptosis. At the plasma membrane, catalyzes reduction of coenzyme Q/ubiquinone-10 to ubiquinol-10, a lipophilic radical-trapping antioxidant that prevents lipid oxidative damage and consequently ferroptosis. Acts in parallel to GPX4 to suppress phospholipid peroxidation and ferroptosis. This anti-ferroptotic function is independent of cellular glutathione levels. Also acts as a potent radical-trapping antioxidant by mediating warfarin-resistant vitamin K reduction in the canonical vitamin K cycle: catalyzes NAD(P)H-dependent reduction of vitamin K (phylloquinone, menaquinone-4 and menadione) to hydroquinone forms. Hydroquinones act as potent radical-trapping antioxidants inhibitor of phospholipid peroxidation and ferroptosis. May play a role in mitochondrial stress signaling. Upon oxidative stress, associates with the lipid peroxidation end product 4-hydroxy-2-nonenal (HNE) forming a lipid adduct devoid of oxidoreductase activity, which then translocates from mitochondria into the nucleus triggering DNA damage and cell death. The polypeptide is Ferroptosis suppressor protein 1 (aifm2) (Xenopus tropicalis (Western clawed frog)).